The sequence spans 393 residues: Proteasome-activating nucleotidase (393 aa).

A coiled-coil region spans residues 14–53 (SDEVQLVRLLEEKIKSLQIEIENLRKELNYYKAEMEKMLS). ATP contacts are provided by residues 178–183 (GTGKTM) and tyrosine 317. The interval 391–393 (KYS) is docks into pockets in the proteasome alpha-ring to cause gate opening.

Belongs to the AAA ATPase family. As to quaternary structure, homohexamer. The hexameric complex has a two-ring architecture resembling a top hat that caps the 20S proteasome core at one or both ends. Upon ATP-binding, the C-terminus of PAN interacts with the alpha-rings of the proteasome core by binding to the intersubunit pockets.

Its subcellular location is the cytoplasm. ATPase which is responsible for recognizing, binding, unfolding and translocation of substrate proteins into the archaeal 20S proteasome core particle. Is essential for opening the gate of the 20S proteasome via an interaction with its C-terminus, thereby allowing substrate entry and access to the site of proteolysis. Thus, the C-termini of the proteasomal ATPase function like a 'key in a lock' to induce gate opening and therefore regulate proteolysis. Unfolding activity requires energy from ATP hydrolysis, whereas ATP binding alone promotes ATPase-20S proteasome association which triggers gate opening, and supports translocation of unfolded substrates. The protein is Proteasome-activating nucleotidase of Saccharolobus islandicus (strain Y.N.15.51 / Yellowstone #2) (Sulfolobus islandicus).